The following is an 87-amino-acid chain: Small ribosomal subunit protein bS18B (87 aa).

Belongs to the bacterial ribosomal protein bS18 family. In terms of assembly, part of the 30S ribosomal subunit. Forms a tight heterodimer with protein bS6.

Binds as a heterodimer with protein bS6 to the central domain of the 16S rRNA, where it helps stabilize the platform of the 30S subunit. The polypeptide is Small ribosomal subunit protein bS18B (Mycobacterium marinum (strain ATCC BAA-535 / M)).